The chain runs to 216 residues: Elongation factor 1-beta (216 aa).

Belongs to the EF-1-beta/EF-1-delta family. In terms of assembly, EF-1 is composed of 4 subunits: alpha, beta, delta, and gamma. Interacts with actin.

It localises to the cytoplasm. In terms of biological role, EF-1-beta and EF-1-delta stimulate the exchange of GDP bound to EF-1-alpha to GTP. This chain is Elongation factor 1-beta (efa1B), found in Dictyostelium discoideum (Social amoeba).